Consider the following 2380-residue polypeptide: DNA polymerase epsilon catalytic subunit A (2380 aa).

Residues 169-196 show a composition bias toward low complexity; that stretch reads YYNKGNNNNNNHQNYNNNNNQNNNNFNK. 5 disordered regions span residues 169–209, 1178–1210, 1766–1787, 1967–1998, and 2059–2120; these read YYNK…NNSK, FFEKTEDNDQDNDNDNDNDNDNDNDNSKPQQTD, KNTSNNSNTKNGANQNTTNDTT, QQQQQQQDNADDDDDDDVSENEEEQQQNKNKK, and KIST…TTTS. The span at 1183-1201 shows a compositional bias: acidic residues; sequence EDNDQDNDNDNDNDNDNDN. Residues 1767 to 1776 show a composition bias toward low complexity; it reads NTSNNSNTKN. The segment covering 1777–1787 has biased composition (polar residues); sequence GANQNTTNDTT. The segment covering 1975 to 1991 has biased composition (acidic residues); the sequence is NADDDDDDDVSENEEEQ. Composition is skewed to low complexity over residues 2059–2081 and 2110–2120; these read KISTTSSSSNNDSTAATTTTTKD and SSSSSTTTTTS. Residues Cys2225 and Cys2228 each contribute to the Zn(2+) site. Residues 2225–2288 form a CysA-type zinc finger; it reads CSSCHSCRDI…RVPELSCIQC (64 aa). Low complexity predominate over residues 2245–2258; sequence ISSRLSSQQKSNNN. The tract at residues 2245–2275 is disordered; the sequence is ISSRLSSQQKSNNNDSDDSDDDNEENEGDDD. Positions 2259–2275 are enriched in acidic residues; the sequence is DSDDSDDDNEENEGDDD. The Zn(2+) site is built by Cys2285 and Cys2288. Positions 2319, 2322, 2334, and 2337 each coordinate [4Fe-4S] cluster. Residues 2319–2337 carry the CysB motif motif; that stretch reads CSKCNDVKSDNLGDICPQC.

The protein belongs to the DNA polymerase type-B family. In terms of assembly, consists of three subunits: pole, pole2 and pole3. [4Fe-4S] cluster serves as cofactor.

The protein resides in the nucleus. The catalysed reaction is DNA(n) + a 2'-deoxyribonucleoside 5'-triphosphate = DNA(n+1) + diphosphate. Functionally, DNA polymerase II participates in chromosomal DNA replication. The chain is DNA polymerase epsilon catalytic subunit A (pole) from Dictyostelium discoideum (Social amoeba).